Here is a 1704-residue protein sequence, read N- to C-terminus: ABC transporter ced-7 (1704 aa).

Residues 23–43 form a helical membrane-spanning segment; that stretch reads VWTLFELIIPCLLLGPLVYLV. N-linked (GlcNAc...) asparagine glycans are attached at residues asparagine 126 and asparagine 145. The next 3 membrane-spanning stretches (helical) occupy residues 256-276, 306-326, and 334-354; these read AFID…VIHI, VVMA…PLTF, and AALI…GAFV. Residue asparagine 359 is glycosylated (N-linked (GlcNAc...) asparagine). 2 helical membrane passes run 362 to 382 and 389 to 409; these read NSAI…SYKL and ISSC…AVEA. Residues asparagine 421 and asparagine 427 are each glycosylated (N-linked (GlcNAc...) asparagine). A helical transmembrane segment spans residues 436 to 456; the sequence is GWALVMMIVDILWMSIGALVV. A glycan (N-linked (GlcNAc...) asparagine) is linked at asparagine 481. Residues 511–536 are disordered; the sequence is NPMASTSLNPPNADSDSLLEGSTEAD. The segment covering 512-525 has biased composition (polar residues); that stretch reads PMASTSLNPPNADS. In terms of domain architecture, ABC transporter 1 spans 546–777; that stretch reads IIVRNLVKIW…FGTGYLLTVV (232 aa). 580 to 587 contacts ATP; sequence GHNGAGKS. N-linked (GlcNAc...) asparagine glycosylation is found at asparagine 678, asparagine 727, and asparagine 899. Polar residues-rich tracts occupy residues 888 to 902 and 911 to 921; these read RQNS…NASE and DTQSSTKSADS. A disordered region spans residues 888–933; that stretch reads RQNSRISHNSRNASEPSLKPAGYDTQSSTKSADSYQKLMDSQARGP. Residues 963–983 form a helical membrane-spanning segment; the sequence is LFTQVLIPIILLGLVGSLTTL. 3 N-linked (GlcNAc...) asparagine glycosylation sites follow: asparagine 986, asparagine 1012, and asparagine 1045. The next 7 membrane-spanning stretches (helical) occupy residues 1126-1146, 1153-1173, 1176-1196, 1201-1221, 1234-1254, 1266-1286, and 1311-1331; these read LAPM…MFLI, FAHQ…ASLI, GILY…FHWM, AIVI…IYAV, LLII…FLIF, ILVN…AIIT, and LMGT…FKFV. The 225-residue stretch at 1379–1603 folds into the ABC transporter 2 domain; it reads LVIKDLTKTF…YGNNYTMTLS (225 aa). 1411-1418 contacts ATP; sequence GVNGAGKT. N-linked (GlcNAc...) asparagine glycans are attached at residues asparagine 1597 and asparagine 1632.

The protein belongs to the ABC transporter superfamily. ABCA family. In terms of tissue distribution, ubiquitous in embryos. Expressed in larval germline precursors. Expression in larvae and adults is seen in amphid sheath cells, pharyngeal-intestinal valve and phasmid sheath cells. Low levels of expression are also seen in gonadal sheath cells.

Its subcellular location is the membrane. Its function is as follows. Functions in the engulfment of cell corpses during embryonic programmed cell death to translocate molecules that mediate homotypic adhesion between cell surfaces of the dying and engulfing cells. This chain is ABC transporter ced-7 (ced-7), found in Caenorhabditis elegans.